We begin with the raw amino-acid sequence, 209 residues long: Large ribosomal subunit protein bL21m (209 aa).

Residues 1-43 (MAAAIAASALPGAFGRLVSVCSRSILASQGSGSASLWSASRRF) constitute a mitochondrion transit peptide.

The protein belongs to the bacterial ribosomal protein bL21 family. Component of the mitochondrial ribosome large subunit (39S) which comprises a 16S rRNA and about 50 distinct proteins.

Its subcellular location is the mitochondrion. This chain is Large ribosomal subunit protein bL21m (Mrpl21), found in Mus musculus (Mouse).